We begin with the raw amino-acid sequence, 541 residues long: Protein ST7 homolog (541 aa).

The chain crosses the membrane as a helical span at residues 15-35; the sequence is FYVALTGTSSLISGLILIFEW. A disordered region spans residues 62–116; that stretch reads DAQSDSSNGSGSSTSSGSSSSSNGGGGGGGGGAGGGGPGAGGGTNSTTTTGTQMP. The segment covering 67 to 83 has biased composition (low complexity); that stretch reads SSNGSGSSTSSGSSSSS. The segment covering 84 to 105 has biased composition (gly residues); the sequence is NGGGGGGGGGAGGGGPGAGGGT. A helical membrane pass occupies residues 476 to 496; the sequence is LPFFILFTAGLCSFTALLALL.

It belongs to the ST7 family.

The protein resides in the membrane. In Drosophila pseudoobscura pseudoobscura (Fruit fly), this protein is Protein ST7 homolog.